Consider the following 1489-residue polypeptide: Sex-determining transformer protein 2 (1489 aa).

The N-terminal stretch at 1–33 (MKLAFNKLLVASVVFTVLSFGLLLASLFTTTAT) is a signal peptide. Transmembrane regions (helical) follow at residues 454–474 (MIYF…AFAF), 489–509 (GFIT…ILID), 513–533 (LCYI…VTFI), 600–620 (YWFL…FFID), 622–642 (DVQK…FEEM), 749–769 (AVVV…LLFI), 931–951 (IFAA…FSIG), 958–978 (LAFA…VSLF), 986–1006 (YTNV…CDLA), 1041–1061 (VQIF…TAII), and 1066–1086 (AFFI…FNSL). The interval 1138-1288 (EFSIRPTENT…EQQEVTDDVA (151 aa)) is interaction with fem-3. Disordered regions lie at residues 1143 to 1176 (PTEN…DPSM), 1233 to 1393 (LLRQ…YPPS), and 1412 to 1489 (RNLP…TPGL). 3 stretches are compositionally biased toward basic and acidic residues: residues 1275–1298 (DPAK…EVRK), 1326–1340 (VSRE…REPR), and 1423–1433 (RPRDWDQRRLV). The tract at residues 1402–1423 (CEDVYWKYNERNLPDNVPMPPR) is MX regulatory domain; required for tra-1 binding. Residues 1444–1456 (VPPPGRSAIPIPP) show a composition bias toward pro residues. Over residues 1460 to 1482 (RLRERRREQHLREQEARRNRPES) the composition is skewed to basic and acidic residues.

As to quaternary structure, interacts with tra-1 and fem-3.

The protein resides in the membrane. Functionally, plays a major role in controlling sexual cell fates. Promotes female development in XX animals where it sequesters one or more of the FEM proteins to the membrane thereby freeing the tra-1 protein (a putative transcription factor) to enter the nucleus and promote female development. In XO animals it acts as a receptor for her-1 which prevents it from binding to FEM proteins thereby repressing the activity of tra-1. Negatively regulates male development when bound to fem-3 and is required together with tra-1 for promoting spermatogenesis. Also required for feminizing tra-3 activity. This chain is Sex-determining transformer protein 2, found in Caenorhabditis briggsae.